Here is a 142-residue protein sequence, read N- to C-terminus: Protein archease (142 aa).

Residues aspartate 12, aspartate 141, and isoleucine 142 each contribute to the Ca(2+) site.

The protein belongs to the archease family. In terms of assembly, in solution, exists as a monomer, trimer and hexamer. Oligomeric states form a tripartite complex with tRNA and PAB1947 methyltransferase.

Functionally, activates the tRNA-splicing ligase complex by facilitating the enzymatic turnover of catalytic subunit RtcB. Acts by promoting the guanylylation of RtcB, a key intermediate step in tRNA ligation. Can also alter the NTP specificity of RtcB such that ATP, dGTP or ITP is used efficiently. Chaperone or modulator of proteins involved in DNA or RNA processing. Protects the tRNA (cytosine-5-)-methyltransferase PAB1947 against aggregation and increases its specificity. The polypeptide is Protein archease (Pyrococcus abyssi (strain GE5 / Orsay)).